The following is a 463-amino-acid chain: Glutamate--tRNA ligase 2 (463 aa).

The 'HIGH' region motif lies at 11–21; it reads PSPTGYLHIGG. The short motif at 240 to 244 is the 'KMSKS' region element; the sequence is KLSKR. ATP is bound at residue lysine 243.

The protein belongs to the class-I aminoacyl-tRNA synthetase family. Glutamate--tRNA ligase type 1 subfamily. In terms of assembly, monomer.

It localises to the cytoplasm. The catalysed reaction is tRNA(Glu) + L-glutamate + ATP = L-glutamyl-tRNA(Glu) + AMP + diphosphate. Catalyzes the attachment of glutamate to tRNA(Glu) in a two-step reaction: glutamate is first activated by ATP to form Glu-AMP and then transferred to the acceptor end of tRNA(Glu). In Campylobacter jejuni (strain RM1221), this protein is Glutamate--tRNA ligase 2.